The sequence spans 365 residues: Prostaglandin E2 receptor EP3 subtype (365 aa).

At 1 to 30 (MAGVWAPEHSVEAHSNQSSAADGCGSVSVA) the chain is on the extracellular side. A glycan (N-linked (GlcNAc...) asparagine) is linked at Asn-16. A helical transmembrane segment spans residues 31 to 55 (FPITMMVTGFVGNALAMLLVVRSYR). Over 56–68 (RRESKRKKSFLLC) the chain is Cytoplasmic. A helical transmembrane segment spans residues 69–89 (IGWLALTDLVGQLLTSPVVIL). The Extracellular segment spans residues 90–108 (VYLSQRRWEQLDPSGRLCT). Residues Cys-107 and Cys-184 are joined by a disulfide bond. Residues 109 to 130 (FFGLTMTVFGLSSLLVASAMAV) traverse the membrane as a helical segment. The Cytoplasmic segment spans residues 131–151 (ERALAIRAPHWYASHMKTRAT). A helical transmembrane segment spans residues 152–173 (PVLLGVWLSVLAFALLPVLGVG). Topologically, residues 174–203 (RYSVQWPGTWCFISTGPAGNETDSAREPGS) are extracellular. An N-linked (GlcNAc...) asparagine glycan is attached at Asn-193. A helical membrane pass occupies residues 204–229 (VAFASAFACLGLLALVVTFACNLATI). Residues 230-259 (KALVSRCRAKAAASQSSAQWGRITTETAIQ) are Cytoplasmic-facing. The helical transmembrane segment at 260–283 (LMGIMCVLSVCWSPLLIMMLKMIF) threads the bilayer. Residues 284-303 (NQMSVEQCKTQMGKEKECNS) are Extracellular-facing. A helical transmembrane segment spans residues 304–325 (FLIAVRLASLNQILDPWVYLLL). The Cytoplasmic segment spans residues 326–365 (RKILLRKFCQIRDHTNYASSSTSLPCPGSSVLMWSDQLER).

It belongs to the G-protein coupled receptor 1 family. Interacts (via C-terminus) with MKLN1. In terms of assembly, does not interact with MKLN1. As to expression, principally expressed in the tubules of the renal medulla. Specific expression is seen in medullary and cortical thick ascending limbs; lower levels are detected in cortical and inner medullary collecting ducts. Not detected significantly in the glomeruli. In the brain, expressed in all types of glial cells.

The protein resides in the cell membrane. Functionally, receptor for prostaglandin E2 (PGE2). Required for normal development of fever in response to pyrinogens, including IL1B, prostaglandin E2 and bacterial lipopolysaccharide (LPS). Required for normal potentiation of platelet aggregation by prostaglandin E2, and thus plays a role in the regulation of blood coagulation. Required for increased HCO3(-) secretion in the duodenum in response to mucosal acidification, and thereby contributes to the protection of the mucosa against acid-induced ulceration. Not required for normal kidney function, normal urine volume and osmolality. In terms of biological role, receptor for prostaglandin E2 (PGE2); ligand binding activates a signaling cascade via G(i) proteins that leads to the inhibition of adenylate cyclase. Receptor for prostaglandin E2 (PGE2); ligand binding can activate several distinct signaling cascades, resulting in activation or inhibition of adenylate cyclase. This chain is Prostaglandin E2 receptor EP3 subtype (Ptger3), found in Rattus norvegicus (Rat).